The chain runs to 1464 residues: Neuropathy target esterase sws (1464 aa).

At Met1–Ala34 the chain is on the lumenal side. Residues Val35–Phe55 traverse the membrane as a helical segment. Residues Lys56–Asn1464 are Cytoplasmic-facing. A nucleoside 3',5'-cyclic phosphate is bound at residue Ile176–Arg303. Disordered regions lie at residues Asn329–His393 and Gln409–Thr438. The segment covering Thr338–Pro367 has biased composition (low complexity). Over residues Gln409 to Asn420 the composition is skewed to polar residues. At Ser421 the chain carries Phosphoserine. Residues Thr422–Thr438 are compositionally biased toward low complexity. Residues Glu456–Arg586 and Ile575–Arg702 contribute to the a nucleoside 3',5'-cyclic phosphate site. Residues Leu928 to Arg1094 form the PNPLA domain. The short motif at Gly932–Gly937 is the GXGXXG element. The short motif at Gly959 to Gly963 is the GXSXG element. The Nucleophile role is filled by Ser961. Catalysis depends on Asp1081, which acts as the Proton acceptor. Residues Asp1081 to Gly1083 carry the DGA/G motif. Ser1175 carries the phosphoserine modification. Disordered regions lie at residues Val1352–Ser1374 and Ala1400–Asn1464. Positions Lys1429–Val1444 are enriched in basic and acidic residues. Positions Met1450–Asn1464 are enriched in polar residues.

It belongs to the NTE family. As to quaternary structure, interacts with Pka-C3; interaction inhibits the catalytic function of Pka-C3 and the esterase activity of sws.

It localises to the endoplasmic reticulum membrane. It carries out the reaction a 1-acyl-sn-glycero-3-phosphocholine + H2O = sn-glycerol 3-phosphocholine + a fatty acid + H(+). Its function is as follows. Phospholipase B that deacylates intracellular phosphatidylcholine (PtdCho), generating glycerophosphocholine (GroPtdCho). This deacylation occurs at both sn-2 and sn-1 positions of PtdCho. Its specific chemical modification by certain organophosphorus (OP) compounds leads to distal axonopathy. Plays a role in the signaling mechanism between neurons and glia that regulates glia wrapping during development of the adult brain. Essential for membrane lipid homeostasis and cell survival in both neurons and glia of the adult brain. This Drosophila grimshawi (Hawaiian fruit fly) protein is Neuropathy target esterase sws.